Here is a 285-residue protein sequence, read N- to C-terminus: ATP synthase gamma chain (285 aa).

The protein belongs to the ATPase gamma chain family. In terms of assembly, F-type ATPases have 2 components, CF(1) - the catalytic core - and CF(0) - the membrane proton channel. CF(1) has five subunits: alpha(3), beta(3), gamma(1), delta(1), epsilon(1). CF(0) has three main subunits: a, b and c.

It is found in the cell membrane. Functionally, produces ATP from ADP in the presence of a proton gradient across the membrane. The gamma chain is believed to be important in regulating ATPase activity and the flow of protons through the CF(0) complex. This chain is ATP synthase gamma chain, found in Dehalococcoides mccartyi (strain CBDB1).